The chain runs to 116 residues: Vitelline membrane protein Vm32E (116 aa).

Residues 1-17 (MQIVALTLVAFVAIAGA) form the signal peptide. In terms of domain architecture, VM spans 36–73 (GYPAPPCPTNYLFSCQPNLAPAPCAQEAPAYGSAGAYT).

It belongs to the vitelline membrane family. Sulfated by pip; may be involved in embryo dorsal-ventral axis determination. Sulfation by pip may occur on covalently bound glycosaminoglycans. As to expression, expressed in stage 10 egg-chambers, localized in the outer eggshell (chorion membrane).

The protein localises to the secreted. Its function is as follows. Major early eggshell protein. In Drosophila melanogaster (Fruit fly), this protein is Vitelline membrane protein Vm32E.